The following is a 412-amino-acid chain: FAD-dependent monooxygenase nscC (412 aa).

The N-terminal stretch at 1–21 is a signal peptide; sequence MGKQQETILIIGAGIAGLTTS. FAD-binding residues include Glu-35 and Ala-46. Asn-92 is a glycosylation site (N-linked (GlcNAc...) asparagine). Arg-119 lines the FAD pocket. N-linked (GlcNAc...) asparagine glycans are attached at residues Asn-170 and Asn-231. Residues Asp-326 and Gly-339 each coordinate FAD.

It belongs to the paxM FAD-dependent monooxygenase family. Requires FAD as cofactor.

The protein operates within secondary metabolite biosynthesis. In terms of biological role, FAD-dependent monooxygenase; part of the gene cluster that mediates the biosynthesis of neosartoricin B, a prenylated anthracenone that probably exhibits T-cell antiproliferative activity, suggestive of a physiological role as an immunosuppressive agent. The non-reducing polyketide synthase nscA probably synthesizes and cyclizes the decaketide backbone. The hydrolase nscB then mediates the product release through hydrolysis followed by spontaneous decarboxylation. The prenyltransferase nscD catalyzes the addition of the dimethylallyl group to the aromatic C5. The FAD-dependent monooxygenase nscC is then responsible for the stereospecific hydroxylation at C2. Neosartoricin B can be converted into two additional compounds neosartoricins C and D. Neosartoricin C is a spirocyclic compound that is cyclized through the attack of C3 hydroxyl on C14, followed by dehydration. On the other hand, neosartoricin D is a further cyclized compound in which attack of C2 on C14 in neosartoricin C results in the formation of the acetal-containing dioxabicyclo-octanone ring. Both of these compounds are novel and possibly represent related metabolites of the gene cluster. The chain is FAD-dependent monooxygenase nscC from Trichophyton verrucosum (strain HKI 0517).